The chain runs to 243 residues: Pyridoxine 5'-phosphate synthase (243 aa).

Asn9 serves as a coordination point for 3-amino-2-oxopropyl phosphate. Residue 11 to 12 (DH) participates in 1-deoxy-D-xylulose 5-phosphate binding. 3-amino-2-oxopropyl phosphate is bound at residue Arg20. His45 acts as the Proton acceptor in catalysis. 1-deoxy-D-xylulose 5-phosphate-binding residues include Arg47 and His52. Glu72 serves as the catalytic Proton acceptor. Thr102 contacts 1-deoxy-D-xylulose 5-phosphate. His193 functions as the Proton donor in the catalytic mechanism. 3-amino-2-oxopropyl phosphate-binding positions include Gly194 and 215-216 (GH).

The protein belongs to the PNP synthase family. As to quaternary structure, homooctamer; tetramer of dimers.

It is found in the cytoplasm. It carries out the reaction 3-amino-2-oxopropyl phosphate + 1-deoxy-D-xylulose 5-phosphate = pyridoxine 5'-phosphate + phosphate + 2 H2O + H(+). The protein operates within cofactor biosynthesis; pyridoxine 5'-phosphate biosynthesis; pyridoxine 5'-phosphate from D-erythrose 4-phosphate: step 5/5. Its function is as follows. Catalyzes the complicated ring closure reaction between the two acyclic compounds 1-deoxy-D-xylulose-5-phosphate (DXP) and 3-amino-2-oxopropyl phosphate (1-amino-acetone-3-phosphate or AAP) to form pyridoxine 5'-phosphate (PNP) and inorganic phosphate. The protein is Pyridoxine 5'-phosphate synthase of Escherichia coli O6:H1 (strain CFT073 / ATCC 700928 / UPEC).